Here is a 142-residue protein sequence, read N- to C-terminus: Large ribosomal subunit protein uL13 (142 aa).

Belongs to the universal ribosomal protein uL13 family. As to quaternary structure, part of the 50S ribosomal subunit.

This protein is one of the early assembly proteins of the 50S ribosomal subunit, although it is not seen to bind rRNA by itself. It is important during the early stages of 50S assembly. The polypeptide is Large ribosomal subunit protein uL13 (Coxiella burnetii (strain CbuG_Q212) (Coxiella burnetii (strain Q212))).